The chain runs to 814 residues: Leucine--tRNA ligase (814 aa).

The 'HIGH' region motif lies at 42-52 (PYPSGNLHIGH). The short motif at 582–586 (KMSKS) is the 'KMSKS' region element. Position 585 (lysine 585) interacts with ATP.

It belongs to the class-I aminoacyl-tRNA synthetase family.

The protein localises to the cytoplasm. It carries out the reaction tRNA(Leu) + L-leucine + ATP = L-leucyl-tRNA(Leu) + AMP + diphosphate. In Herpetosiphon aurantiacus (strain ATCC 23779 / DSM 785 / 114-95), this protein is Leucine--tRNA ligase.